The sequence spans 633 residues: Probable potassium transport system protein Kup (633 aa).

12 helical membrane passes run 21 to 41 (MLVA…LYTL), 61 to 81 (ILSL…MMFV), 112 to 132 (LLVV…MITP), 149 to 169 (GIDH…FLIQ), 176 to 196 (IGIL…ALGV), 217 to 237 (FFMV…LALT), 258 to 278 (WFLL…ALLL), 290 to 310 (LLAP…ATVI), 348 to 368 (IYIG…VIGF), 377 to 397 (AYGV…SAVM), 398 to 418 (LLLW…FLLV), and 430 to 450 (IVQG…LMTT).

It belongs to the HAK/KUP transporter (TC 2.A.72) family.

It is found in the cell inner membrane. It carries out the reaction K(+)(in) + H(+)(in) = K(+)(out) + H(+)(out). Its function is as follows. Transport of potassium into the cell. Likely operates as a K(+):H(+) symporter. The sequence is that of Probable potassium transport system protein Kup from Pseudomonas fluorescens (strain Pf0-1).